The chain runs to 533 residues: Multicopper oxidase CueO (533 aa).

The tat-type signal signal peptide spans 1-28 (MHRRDFLKLTAALGAATSLPLWSRAALA). Plastocyanin-like domains are found at residues 53–166 (QTGS…IDDS), 221–290 (PYPQ…DTRD), and 416–532 (AFNF…FTVS). His-102, His-104, His-142, and His-144 together coordinate Cu cation. The Cu cation site is built by His-458, His-461, His-463, His-514, Cys-515, His-516, and His-520.

This sequence belongs to the multicopper oxidase family. Monomer. Cu cation is required as a cofactor. Predicted to be exported by the Tat system. The position of the signal peptide cleavage has not been experimentally proven.

The protein localises to the periplasm. It carries out the reaction 4 Cu(+) + O2 + 4 H(+) = 4 Cu(2+) + 2 H2O. Functionally, multicopper oxidase involved in copper homeostasis and copper tolerance under aerobic conditions. Is responsible for the oxidation of Cu(+) to the less harmful Cu(2+) in the periplasm, thereby preventing Cu(+) from entering the cytoplasm. The protein is Multicopper oxidase CueO (cueO) of Yersinia pestis.